The primary structure comprises 291 residues: Small ribosomal subunit protein uS2 (291 aa).

This sequence belongs to the universal ribosomal protein uS2 family.

In Orientia tsutsugamushi (strain Boryong) (Rickettsia tsutsugamushi), this protein is Small ribosomal subunit protein uS2.